Consider the following 654-residue polypeptide: Pyoverdine export ATP-binding/permease protein PvdT (654 aa).

The region spanning 6-245 (IELCDIRKAY…QPEQLQANDL (240 aa)) is the ABC transporter domain. 43 to 50 (GASGSGKS) contributes to the ATP binding site. The next 4 helical transmembrane spans lie at 282–302 (ALTL…LAVG), 529–549 (LSLM…IGVM), 596–616 (IVIA…VAFA), and 617–637 (LPAI…FGFM).

The protein belongs to the ABC transporter superfamily. Macrolide exporter (TC 3.A.1.122) family. Part of the tripartite efflux system PvdRT-OpmQ, which is composed of an inner membrane component with both ATPase and permease domains, PvdT, a periplasmic membrane fusion protein, PvdR, and an outer membrane component, OpmQ.

Its subcellular location is the cell inner membrane. Functionally, part of the tripartite efflux system PvdRT-OpmQ required for the secretion into the extracellular milieu of the siderophore pyoverdine (PVD), which is involved in iron acquisition. This subunit binds PVD and drives its secretion by hydrolyzing ATP. The system is responsible for export of newly synthesized PVD after the final steps of biosynthesis have taken place in the periplasm. It is also responsible for recycling of PVD after internalization of ferri-PVD into the periplasm by the outer-membrane receptor FpvA and release of iron from PVD, thus making PVD available for new cycles of iron uptake. The polypeptide is Pyoverdine export ATP-binding/permease protein PvdT (Pseudomonas entomophila (strain L48)).